The sequence spans 456 residues: Anthocyanidin 3-O-glucosyltransferase UFGT (456 aa).

Kaempferol is bound at residue S18. S18 contributes to the quercetin binding site. T19 serves as a coordination point for UDP. T19 contacts UDP-alpha-D-glucose. The kaempferol site is built by H20 and Q84. H20 (proton acceptor) is an active-site residue. Q84 contacts quercetin. The active-site Charge relay is D119. T141 serves as a coordination point for UDP-alpha-D-glucose. Positions 150 and 188 each coordinate kaempferol. Quercetin-binding residues include H150 and Q188. UDP is bound by residues T280, S306, W332, A333, and H350. UDP-alpha-D-glucose-binding residues include T280, S306, W332, A333, H350, W353, N354, S355, and E358. Positions 354, 355, and 358 each coordinate UDP. Position 373 (G373) interacts with quercetin. Positions 374 and 375 each coordinate UDP-alpha-D-glucose.

The protein belongs to the UDP-glycosyltransferase family. As to expression, detected only in berry skin.

It carries out the reaction an anthocyanidin + UDP-alpha-D-glucose + H(+) = an anthocyanidin 3-O-beta-D-glucoside + UDP. The enzyme catalyses cyanidin + UDP-alpha-D-glucose = cyanidin 3-O-beta-D-glucoside + UDP + H(+). It catalyses the reaction delphinidin + UDP-alpha-D-glucose = delphinidin 3-O-beta-D-glucoside + UDP. The catalysed reaction is peonidin + UDP-alpha-D-glucose = peonidin 3-O-beta-D-glucoside + UDP. It carries out the reaction pelargonidin + UDP-alpha-D-glucose = pelargonidin 3-O-beta-D-glucoside + UDP. The enzyme catalyses malvidin + UDP-alpha-D-glucose = malvidin 3-O-beta-D-glucoside + UDP. It catalyses the reaction a flavonol + UDP-alpha-D-glucose = a flavonol 3-O-beta-D-glucoside + UDP + H(+). It participates in pigment biosynthesis; anthocyanin biosynthesis. Its activity is regulated as follows. Inhibited by Mn(2+) and Zn(2+). In the presence of other necessary color factors, this glycosylation reaction allows the accumulation of anthocyanin pigments. Involved in the formation of red wine pigments. UDP-glucose (UDP-Glc) is the physiological sugar donor, and cyanidin is the natural acceptor in vivo. Can glucosylate the anthocyanidins delphinidin, peonidin, pelargonidin and malvidin. The flavonols quercitin and kaempferol can also be glucosylated in vitro, but with glucosylation rates 50-100 times lower than cyanidin. In vitro, can use UDP-Glc, UDP-5SGlc, UDP-Xyl, UDP-Man, UDP-Gal, UDP-GlcNAc, GDP-Glc, dTDP-Glc and dTDP-Xyl as sugar donors, but not UDP-6OMeGal, UDP-Ara, UDP-6FGal, UDP-GlcN, UDP-2FGal, UDP-5SAra, GDP-Man, GDP-Fuc, UDP-Fuc or UDP-Rha. The chain is Anthocyanidin 3-O-glucosyltransferase UFGT from Vitis vinifera (Grape).